Here is a 397-residue protein sequence, read N- to C-terminus: Keratinocyte differentiation factor 1 (397 aa).

Pro residues predominate over residues 1 to 16 (MPRPGQPRPSSGPPRL). Disordered regions lie at residues 1 to 67 (MPRP…SAEP), 130 to 158 (EHNGVPPSPDRAPPSRRDGQRLKTSMGSS), and 192 to 214 (LAEPPPTRHSLPSTFTNSPRGSE). Basic and acidic residues predominate over residues 44–55 (RPDPKDPGHHGP). The span at 201-211 (SLPSTFTNSPR) shows a compositional bias: polar residues. A Phosphoserine modification is found at Ser-218. 2 disordered regions span residues 304-339 (ISTRKSRSRPQTSEGRSARSTAPAAAPDSGHETMLG) and 361-392 (ARKLRPYGAPGYPASQDSSFQGTDTDSSGAPL). Positions 321–330 (ARSTAPAAAP) are enriched in low complexity. Residues 375 to 388 (SQDSSFQGTDTDSS) are compositionally biased toward polar residues.

The protein resides in the cytoplasm. It localises to the cell junction. Its function is as follows. Plays a role in the regulation of the epidermis formation during early development. Required both as an inhibitor of basal cell proliferation and a promoter of differentiation of basal progenitor cell progeny. The polypeptide is Keratinocyte differentiation factor 1 (Kdf1) (Mus musculus (Mouse)).